Consider the following 475-residue polypeptide: Ribulose bisphosphate carboxylase large chain (475 aa).

Positions 1-2 are excised as a propeptide; that stretch reads MS. An N-acetylproline modification is found at Pro-3. Lys-14 is modified (N6,N6,N6-trimethyllysine). Asn-123 and Thr-173 together coordinate substrate. The active-site Proton acceptor is the Lys-175. Lys-177 lines the substrate pocket. The Mg(2+) site is built by Lys-201, Asp-203, and Glu-204. Lys-201 carries the post-translational modification N6-carboxylysine. Residue His-294 is the Proton acceptor of the active site. Positions 295, 327, and 379 each coordinate substrate.

The protein belongs to the RuBisCO large chain family. Type I subfamily. As to quaternary structure, heterohexadecamer of 8 large chains and 8 small chains; disulfide-linked. The disulfide link is formed within the large subunit homodimers. Requires Mg(2+) as cofactor. Post-translationally, the disulfide bond which can form in the large chain dimeric partners within the hexadecamer appears to be associated with oxidative stress and protein turnover.

Its subcellular location is the plastid. The protein resides in the chloroplast. It catalyses the reaction 2 (2R)-3-phosphoglycerate + 2 H(+) = D-ribulose 1,5-bisphosphate + CO2 + H2O. It carries out the reaction D-ribulose 1,5-bisphosphate + O2 = 2-phosphoglycolate + (2R)-3-phosphoglycerate + 2 H(+). Its function is as follows. RuBisCO catalyzes two reactions: the carboxylation of D-ribulose 1,5-bisphosphate, the primary event in carbon dioxide fixation, as well as the oxidative fragmentation of the pentose substrate in the photorespiration process. Both reactions occur simultaneously and in competition at the same active site. This is Ribulose bisphosphate carboxylase large chain from Spirogyra maxima (Green alga).